We begin with the raw amino-acid sequence, 946 residues long: Phosphatidylinositol 4,5-bisphosphate 5-phosphatase INP51 (946 aa).

The SAC domain occupies 151-480 (LKKLFSDGTF…YYWLDRTYTK (330 aa)). Disordered stretches follow at residues 872–902 (SDSI…SDLK) and 927–946 (PKRD…FIER). Residues 936-946 (ENEDEPLFIER) show a composition bias toward acidic residues.

This sequence belongs to the synaptojanin family. It in the central section; belongs to the inositol 1,4,5-trisphosphate 5-phosphatase family. As to quaternary structure, interacts with IRS4 and TAX4.

The protein resides in the cytoplasm. Its subcellular location is the cytoskeleton. It localises to the actin patch. It carries out the reaction a 1,2-diacyl-sn-glycero-3-phospho-(1D-myo-inositol-4,5-bisphosphate) + H2O = a 1,2-diacyl-sn-glycero-3-phospho-(1D-myo-inositol 4-phosphate) + phosphate. IRS4 and TAX4 are both positive regulator of INP51 activity and phosphatidylinositol 4,5-bisphosphate turnover. In terms of biological role, controls the cellular levels and subcellular distribution of phosphatidylinositol 4,5-bisphosphate (PtdIns(4,5)P2). Does not utilize phosphatidylinositol 3,5-bisphosphate (PtdIns(3,5)P2), nor phosphatidylinositol 3-phosphate (PtdIns(3)P) and phosphatidylinositol 4-phosphate (PtdIns(4)P). Plays an essential role in a TGN (trans Golgi network)-to-early endosome pathway. Involved in endocytosis and acts as a negative regulator of the Slm pathway which modulates polarized actin assembly and growth. The chain is Phosphatidylinositol 4,5-bisphosphate 5-phosphatase INP51 (INP51) from Saccharomyces cerevisiae (strain ATCC 204508 / S288c) (Baker's yeast).